The following is a 316-amino-acid chain: Probable prolyl 4-hydroxylase 7 (316 aa).

Over 1-4 (MDSR) the chain is Cytoplasmic. Residues 5–24 (IFLAFSLCFLFTLPLISSAP) form a helical; Signal-anchor for type II membrane protein membrane-spanning segment. Topologically, residues 25-316 (NRFLTRSSNT…CRKSCKACSS (292 aa)) are lumenal. The N-linked (GlcNAc...) asparagine glycan is linked to asparagine 96. Residues 139–261 (NGESMQILHY…KWSATRWIHV (123 aa)) enclose the Fe2OG dioxygenase domain. Fe cation-binding residues include histidine 157 and aspartate 159. Asparagine 233 carries N-linked (GlcNAc...) asparagine glycosylation. Histidine 242 contributes to the Fe cation binding site. Lysine 252 contributes to the 2-oxoglutarate binding site. Residues 274 to 314 (CMDENVSCEKWAKAGECQKNPTYMVGSDKDHGYCRKSCKAC) enclose the ShKT domain. 3 disulfides stabilise this stretch: cysteine 274/cysteine 314, cysteine 281/cysteine 307, and cysteine 290/cysteine 311. Residue asparagine 278 is glycosylated (N-linked (GlcNAc...) asparagine).

This sequence belongs to the P4HA family. Requires Fe(2+) as cofactor. The cofactor is L-ascorbate.

The protein resides in the endoplasmic reticulum membrane. The catalysed reaction is L-prolyl-[collagen] + 2-oxoglutarate + O2 = trans-4-hydroxy-L-prolyl-[collagen] + succinate + CO2. Its function is as follows. Catalyzes the post-translational formation of 4-hydroxyproline in -Xaa-Pro-Gly- sequences in proline-rich peptide sequences of plant glycoproteins and other proteins. Hydroxyprolines are important constituent of many plant cell wall glycoproteins such as extensins, hydroxyproline-rich glycoproteins, lectins and arabinogalactan proteins. This is Probable prolyl 4-hydroxylase 7 from Arabidopsis thaliana (Mouse-ear cress).